The primary structure comprises 164 residues: Cytochrome c-type biogenesis protein CcmE (164 aa).

The Cytoplasmic portion of the chain corresponds to 1–8 (MNPRRKSR). The chain crosses the membrane as a helical; Signal-anchor for type II membrane protein span at residues 9-29 (LYLAVVVLIGIGLTTTLVLYA). The Periplasmic segment spans residues 30–164 (LRSNIDLFYT…NSTAAQGNAS (135 aa)). 2 residues coordinate heme: H130 and Y134. The segment covering 131–150 (DEKYTPPEVKEAMKENHTRP) has biased composition (basic and acidic residues). The disordered stretch occupies residues 131 to 164 (DEKYTPPEVKEAMKENHTRPAEAYNSTAAQGNAS). A compositionally biased stretch (polar residues) spans 154–164 (YNSTAAQGNAS).

This sequence belongs to the CcmE/CycJ family.

It is found in the cell inner membrane. Heme chaperone required for the biogenesis of c-type cytochromes. Transiently binds heme delivered by CcmC and transfers the heme to apo-cytochromes in a process facilitated by CcmF and CcmH. This is Cytochrome c-type biogenesis protein CcmE from Yersinia enterocolitica serotype O:8 / biotype 1B (strain NCTC 13174 / 8081).